The chain runs to 305 residues: Ribonucleoside-diphosphate reductase small subunit (305 aa).

Fe cation contacts are provided by Glu-64, Glu-94, and His-97. Tyr-101 is a catalytic residue. A helical transmembrane segment spans residues 150-170 (ILLFLLVEGIFFISSFFSIGL). Fe cation is bound by residues Glu-157, Glu-191, and His-194.

The protein belongs to the ribonucleoside diphosphate reductase small chain family. In terms of assembly, heterotetramer composed of a homodimer of the large subunit (R1) and a homodimer of the small subunit (R2). Larger multisubunit protein complex are also active, composed of (R1)n(R2)n. Fe cation serves as cofactor.

Its subcellular location is the host membrane. The catalysed reaction is a 2'-deoxyribonucleoside 5'-diphosphate + [thioredoxin]-disulfide + H2O = a ribonucleoside 5'-diphosphate + [thioredoxin]-dithiol. Its function is as follows. Ribonucleoside-diphosphate reductase holoenzyme provides the precursors necessary for viral DNA synthesis. Allows virus growth in non-dividing cells, as well as reactivation from latency in infected hosts. Catalyzes the biosynthesis of deoxyribonucleotides from the corresponding ribonucleotides. This Saimiri sciureus (Common squirrel monkey) protein is Ribonucleoside-diphosphate reductase small subunit.